The chain runs to 300 residues: 33 kDa chaperonin (300 aa).

Intrachain disulfides connect C235–C237 and C269–C272.

The protein belongs to the HSP33 family. Under oxidizing conditions two disulfide bonds are formed involving the reactive cysteines. Under reducing conditions zinc is bound to the reactive cysteines and the protein is inactive.

The protein localises to the cytoplasm. In terms of biological role, redox regulated molecular chaperone. Protects both thermally unfolding and oxidatively damaged proteins from irreversible aggregation. Plays an important role in the bacterial defense system toward oxidative stress. The protein is 33 kDa chaperonin of Pseudomonas fluorescens (strain ATCC BAA-477 / NRRL B-23932 / Pf-5).